The chain runs to 424 residues: Inositol phosphosphingolipids phospholipase C (424 aa).

Glu-49 contacts Mg(2+). Catalysis depends on His-289, which acts as the Proton acceptor. Helical transmembrane passes span 335 to 357 (LRIA…IAWC) and 364 to 386 (VIIL…CIGL).

It belongs to the neutral sphingomyelinase family. Mg(2+) is required as a cofactor.

Its subcellular location is the cell membrane. It is found in the endoplasmic reticulum membrane. Its pathway is lipid metabolism; sphingolipid metabolism. Functionally, inositol phosphosphingolipids phospholipase essential for the coordination of cell wall formation. Responsible for the hydrolysis of the phosphosphingolipids (IPS), inositol phosphorylceramide (IPC), mannosylinositol phosphorylceramide (MIPC), and mannosyldiinositol phosphorylceramide (M(IP)2C). The sequence is that of Inositol phosphosphingolipids phospholipase C (css1) from Schizosaccharomyces pombe (strain 972 / ATCC 24843) (Fission yeast).